We begin with the raw amino-acid sequence, 309 residues long: D-alanine--D-alanine ligase (309 aa).

The ATP-grasp domain maps to 104–301; that stretch reads KQIWQGSDLP…FDALCVEILA (198 aa). 130 to 185 lines the ATP pocket; sequence VASLGLPVIIKPVHEGSSIGMSKVEKIEDFAPAIEKATAHDAIVMAEKWITGREYT. Residues Asp255, Glu268, and Asn270 each contribute to the Mg(2+) site.

This sequence belongs to the D-alanine--D-alanine ligase family. Mg(2+) serves as cofactor. It depends on Mn(2+) as a cofactor.

Its subcellular location is the cytoplasm. It carries out the reaction 2 D-alanine + ATP = D-alanyl-D-alanine + ADP + phosphate + H(+). Its pathway is cell wall biogenesis; peptidoglycan biosynthesis. In terms of biological role, cell wall formation. This Acinetobacter baylyi (strain ATCC 33305 / BD413 / ADP1) protein is D-alanine--D-alanine ligase.